The chain runs to 352 residues: tRNA pseudouridine synthase D (352 aa).

Residue Asp-81 is the Nucleophile of the active site. A TRUD domain is found at 157–303; that stretch reads GVPNYFGTQR…MDHERRILRL (147 aa).

This sequence belongs to the pseudouridine synthase TruD family.

It catalyses the reaction uridine(13) in tRNA = pseudouridine(13) in tRNA. In terms of biological role, responsible for synthesis of pseudouridine from uracil-13 in transfer RNAs. The sequence is that of tRNA pseudouridine synthase D from Pseudomonas putida (strain ATCC 47054 / DSM 6125 / CFBP 8728 / NCIMB 11950 / KT2440).